The chain runs to 262 residues: Leucine-rich repeat-containing protein 18 (262 aa).

LRR repeat units lie at residues 28 to 49, 51 to 72, 74 to 95, 97 to 118, 122 to 144, 145 to 167, and 168 to 189; these read GRKR…ILRL, DIDE…IAKF, NLRW…IGQM, SLLF…VELN, NIRT…GALK, ELHE…AKLP, and KLKK…EMFV.

Exclusively expressed in spermatocytes and roud spermatids within seminiferous tubules during spermatogenesis.

The protein localises to the cytoplasm. Functionally, may be involved in the regulation of spermatogenesis and sperm maturation. The polypeptide is Leucine-rich repeat-containing protein 18 (Lrrc18) (Mus musculus (Mouse)).